A 107-amino-acid chain; its full sequence is UPF0122 protein BLi01817/BL02321 (107 aa).

Belongs to the UPF0122 family.

In terms of biological role, might take part in the signal recognition particle (SRP) pathway. This is inferred from the conservation of its genetic proximity to ftsY/ffh. May be a regulatory protein. This Bacillus licheniformis (strain ATCC 14580 / DSM 13 / JCM 2505 / CCUG 7422 / NBRC 12200 / NCIMB 9375 / NCTC 10341 / NRRL NRS-1264 / Gibson 46) protein is UPF0122 protein BLi01817/BL02321.